The following is a 340-amino-acid chain: Probable dual-specificity RNA methyltransferase RlmN (340 aa).

Residue E90 is the Proton acceptor of the active site. Positions 97-325 (QVSRKTACLS…PVTRRYQRGN (229 aa)) constitute a Radical SAM core domain. C104 and C331 are joined by a disulfide. Residues C111, C115, and C118 each coordinate [4Fe-4S] cluster. S-adenosyl-L-methionine contacts are provided by residues 157-158 (GE), S189, 212-214 (SLT), and N288. Residue C331 is the S-methylcysteine intermediate of the active site.

This sequence belongs to the radical SAM superfamily. RlmN family. It depends on [4Fe-4S] cluster as a cofactor.

The protein resides in the cytoplasm. The catalysed reaction is adenosine(2503) in 23S rRNA + 2 reduced [2Fe-2S]-[ferredoxin] + 2 S-adenosyl-L-methionine = 2-methyladenosine(2503) in 23S rRNA + 5'-deoxyadenosine + L-methionine + 2 oxidized [2Fe-2S]-[ferredoxin] + S-adenosyl-L-homocysteine. It carries out the reaction adenosine(37) in tRNA + 2 reduced [2Fe-2S]-[ferredoxin] + 2 S-adenosyl-L-methionine = 2-methyladenosine(37) in tRNA + 5'-deoxyadenosine + L-methionine + 2 oxidized [2Fe-2S]-[ferredoxin] + S-adenosyl-L-homocysteine. Functionally, specifically methylates position 2 of adenine 2503 in 23S rRNA and position 2 of adenine 37 in tRNAs. The chain is Probable dual-specificity RNA methyltransferase RlmN from Treponema pallidum (strain Nichols).